A 408-amino-acid chain; its full sequence is CinA-like protein (408 aa).

It belongs to the CinA family.

The polypeptide is CinA-like protein (Fervidobacterium nodosum (strain ATCC 35602 / DSM 5306 / Rt17-B1)).